Reading from the N-terminus, the 343-residue chain is Nuclear hormone receptor family member nhr-167 (343 aa).

Residues histidine 5 to leucine 81 constitute a DNA-binding region (nuclear receptor). NR C4-type zinc fingers lie at residues cysteine 8–cysteine 28 and cysteine 45–cysteine 64. The NR LBD domain maps to threonine 101–alanine 339.

It belongs to the nuclear hormone receptor family.

It localises to the nucleus. In terms of biological role, orphan nuclear receptor. This Caenorhabditis elegans protein is Nuclear hormone receptor family member nhr-167 (nhr-167).